Consider the following 1156-residue polypeptide: Reverse gyrase 1 (1156 aa).

An RG N-terminal-type zinc finger spans residues Met1–Asn38. 4 residues coordinate Zn(2+): Cys10, Cys13, Cys28, and Cys31. Residues Gln86 and Ala103–Thr110 each bind ATP. The Helicase ATP-binding domain maps to Ile90–Pro277. Positions Asp184–Asp187 match the DEAD box motif. The segment at Ile570 to Val1156 is topoisomerase I. Residues Thr574–Ile736 form the Toprim domain. Glu580 contributes to the Mg(2+) binding site. The RG C-terminal-type zinc-finger motif lies at Ile655–Ser682. Positions 658, 661, 672, and 675 each coordinate Zn(2+). Asp705 provides a ligand contact to Mg(2+). Positions Asn752–Ser1143 constitute a Topo IA-type catalytic domain. Tyr895 functions as the O-(5'-phospho-DNA)-tyrosine intermediate in the catalytic mechanism.

This sequence in the N-terminal section; belongs to the DEAD box helicase family. DDVD subfamily. The protein in the C-terminal section; belongs to the type IA topoisomerase family. Monomer. The cofactor is Zn(2+). Mg(2+) is required as a cofactor.

The protein resides in the cytoplasm. The catalysed reaction is ATP + H2O = ADP + phosphate + H(+). Modifies the topological state of DNA by introducing positive supercoils in an ATP-dependent process, increasing the linking number in steps of +1. Binds to single-stranded DNA, transiently cleaves and then rejoins the ends, introducing a positive supercoil in the process. The scissile phosphodiester is attacked by the catalytic tyrosine of the enzyme, resulting in the formation of a DNA-(5'-phosphotyrosyl)-enzyme intermediate. Probably involved in rewinding DNA strands in regions of the chromosome that have opened up to allow replication, transcription, DNA repair and/or for DNA protection. This Sulfurisphaera tokodaii (strain DSM 16993 / JCM 10545 / NBRC 100140 / 7) (Sulfolobus tokodaii) protein is Reverse gyrase 1.